The primary structure comprises 157 residues: Large ribosomal subunit protein uL15 (157 aa).

Residues 1–56 form a disordered region; that stretch reads MRLEDIRPQPGSTRRRRRLGRGIAAGQGASCGKGMRGQKARKGGGPRPGFEGGQTP. Over residues 23 to 35 the composition is skewed to gly residues; it reads IAAGQGASCGKGM.

It belongs to the universal ribosomal protein uL15 family. In terms of assembly, part of the 50S ribosomal subunit.

Binds to the 23S rRNA. The polypeptide is Large ribosomal subunit protein uL15 (Synechococcus sp. (strain JA-3-3Ab) (Cyanobacteria bacterium Yellowstone A-Prime)).